A 680-amino-acid chain; its full sequence is Pilus tip adhesin Cpa (680 aa).

A cross-link (isoglutamyl cysteine thioester (Cys-Gln)) is located at residues 62 to 211 (CFNLTKHFPS…IFQSSDKTFQ (150 aa)). The tract at residues 217 to 236 (EYVPDTPPKPGEEPPAKTEK) is disordered. Residues 226 to 236 (PGEEPPAKTEK) are compositionally biased toward basic and acidic residues. The segment at residues 243–546 (KYAEGDYSKL…ELIDVISMED (304 aa)) is a cross-link (isoaspartyl lysine isopeptide (Lys-Asp)). The region spanning 253–311 (LEGATLKLAQIEGSGFQEKIFDSNKSGEKVELPNGTYVLSELKPPQGYGVATPITFKVA) is the CNA-B domain. The isoglutamyl cysteine thioester (Cys-Gln) cross-link spans 374–526 (CFNADLHSPP…FFVPNSSRYQ (153 aa)). The isoaspartyl lysine isopeptide (Lys-Asn) cross-link spans 562–667 (KTVTGTIADK…KEDETVAFEN (106 aa)). A VPPTG sorting signal motif is present at residues 672-676 (VPPTG). Threonine 675 is covalently cross-linked (Threonyl lysine isopeptide (Thr-Lys) (interchain with K-? in major pilin subunit)). Residues 676 to 680 (GLTTD) constitute a propeptide, removed by sortase.

Monomer. Post-translationally, proteolytically processed and assembled in pili through a transpeptidation reaction catalyzed by a sortase, which leads to a covalent link between Cpa and a major pilin subunit.

The protein localises to the fimbrium. Component of the pilus tip. Can bind covalently, via its two reactive thioester bonds, to molecular targets from host cell surface and can thus mediate adhesion of the streptococcal pili to host cells. Lysine side chains or a carbohydrate with a free amine group might be candidates for Cpa binding. In vitro, can covalently bind to spermidine, but it is unlikely that spermidine is the natural target of Cpa. In Streptococcus pyogenes, this protein is Pilus tip adhesin Cpa (cpa).